Reading from the N-terminus, the 596-residue chain is MLQTIYESESYFSSDGVAGREQLLAEQRMHAMIGKDIKSEFPIGLESISPLDLRTDLRTAVPVGDPGLREKQLQQELLIIKQQQQIQKQLLIAEFQKQHENLTRQHQVQLQEHLKLQQELLAMKQQQELLEREKEQKMEQQRKEQEAERHRQEQQLCHPRSKDRVKERAVASTEVKQKLQEFILSKSATKEPLTNGTSHSMGRHPKLWYTAAHHTSLDQSSPPPSGTSPTYKCPPPGNQDDFPLRKTASEPNLKVRSRLKQKVVERRSSPLLRRKDSIVSSSYKKRIFEVAESSVSSSSPVSGPSSPNNGPVAMEAEHETPVLSVNSRIENLVSHHHLVHHERSLSLLNLYTSPSLPNITLGLHATATQLNTSSSLKEQQKYDPQAPRQGVSMAGQYAGGIPTSSNHVSLEGKANSHQAILQHLLLKEQMRQQKILASGGTPVLHQSPLAAKDRVSPAGRVAHKLPRHRPLHRTQSAPLPQSTLAQLVIQQQHQQFLEKQKQYQQQIHMNKILSKSIEQLRQPEGHLEEAEEDLHGDNLMQEKSSSIDNTRSYSSTDLRTGPFGSVKVKEEPPDSENEIKTHLQSEQKSVFAQQVT.

Basic and acidic residues-rich tracts occupy residues 132 to 153 and 160 to 172; these read REKE…HRQE and RSKD…AVAS. Disordered regions lie at residues 132 to 172, 214 to 258, 293 to 313, and 522 to 596; these read REKE…AVAS, HTSL…VRSR, SSVS…GPVA, and QPEG…QQVT. Residues 172–222 are interaction with mef2; sequence STEVKQKLQEFILSKSATKEPLTNGTSHSMGRHPKLWYTAAHHTSLDQSSP. The segment covering 221 to 237 has biased composition (pro residues); the sequence is SPPPSGTSPTYKCPPPG. Residues 293–312 are compositionally biased toward low complexity; sequence SSVSSSSPVSGPSSPNNGPV. Basic and acidic residues predominate over residues 522–536; the sequence is QPEGHLEEAEEDLHG. A compositionally biased stretch (polar residues) spans 541–558; the sequence is QEKSSSIDNTRSYSSTDL. Basic and acidic residues predominate over residues 567–585; the sequence is KVKEEPPDSENEIKTHLQS. Residues 586 to 596 show a composition bias toward polar residues; it reads EQKSVFAQQVT.

Belongs to the histone deacetylase family. HD type 2 subfamily. Homodimer. Interacts with mef2. In terms of tissue distribution, broadly expressed.

The protein localises to the nucleus. The catalysed reaction is N(6)-acetyl-L-lysyl-[histone] + H2O = L-lysyl-[histone] + acetate. Its function is as follows. Devoided of intrinsic deacetylase activity, promotes the deacetylation of lysine residues on the N-terminal part of the core histones (H2A, H2B, H3 and H4) by recruiting other histone deacetylases. Histone deacetylation gives a tag for epigenetic repression and plays an important role in transcriptional regulation, cell cycle progression and developmental events. Represses MEF2-dependent transcription. This chain is Histone deacetylase 9 (hdac9), found in Xenopus laevis (African clawed frog).